A 241-amino-acid chain; its full sequence is Tetraspanin-1 (241 aa).

The Cytoplasmic segment spans residues 1–11 (MQCFSFIKTMM). Residues 12–32 (ILFNLLIFLCGAALLAVGIWV) traverse the membrane as a helical segment. Over 33–52 (SIDGASFLKIFGPLSSSAMQ) the chain is Extracellular. The helical transmembrane segment at 53 to 73 (FVNVGYFLIAAGVVVFALGFL) threads the bilayer. Over 74-88 (GCYGAKTESKCALVT) the chain is Cytoplasmic. The chain crosses the membrane as a helical span at residues 89–109 (FFFILLLIFIAEVAAAVVALV). Residues 110–211 (YTTMAEHFLT…NQLLYDIRTN (102 aa)) lie on the Extracellular side of the membrane. Asn-141, Asn-154, Asn-178, and Asn-184 each carry an N-linked (GlcNAc...) asparagine glycan. A helical transmembrane segment spans residues 212–232 (AVTVGGVAAGIGGLELAAMIV). The Cytoplasmic portion of the chain corresponds to 233–241 (SMYLYCNLQ).

The protein belongs to the tetraspanin (TM4SF) family. In terms of assembly, interacts with SLC19A2. Interacts with NTRK1/TRKA.

It localises to the cell membrane. Its subcellular location is the lysosome membrane. In terms of biological role, structural component of specialized membrane microdomains known as tetraspanin-enriched microdomains (TERMs), which act as platforms for receptor clustering and signaling. Participates thereby in diverse biological functions such as cell signal transduction, adhesion, migration and protein trafficking. Regulates neuronal differentiation in response to NGF by facilitating NGF-mediated activation of NTRK1/TRKA receptor tyrosine kinase and subsequent downstream signaling pathways. Plays a role in the inhibition of TNFalpha-induced apoptosis. Mechanistically, inhibits the NF-kappa-B signaling pathway by blocking phosphorylation of CHUK. Also promotes the stability of the thiamine transporter 1/SLC19A2 in intestinal epithelial cells leading to an increase of thiamine uptake process. This Homo sapiens (Human) protein is Tetraspanin-1 (TSPAN1).